The chain runs to 279 residues: Movement protein (279 aa).

The interval 246–279 (SESEELNVESPPAAIGSSSASRSEAFRPQVVNGL) is disordered. A compositionally biased stretch (low complexity) spans 254–268 (ESPPAAIGSSSASRS).

The protein belongs to the cucumovirus movement protein family.

Its subcellular location is the host cell junction. It is found in the host plasmodesma. Functionally, transports viral genome to neighboring plant cells directly through plasmosdesmata, without any budding. The movement protein allows efficient cell to cell propagation, by bypassing the host cell wall barrier. Acts by forming a tubular structure at the host plasmodesmata, enlarging it enough to allow free passage of virion capsids. The chain is Movement protein from Cucumis sativus (Cucumber).